The following is a 418-amino-acid chain: Glutamyl-tRNA(Gln) amidotransferase subunit D (418 aa).

The Asparaginase/glutaminase domain occupies 74-405; it reads KNISILSTGG…EESKELMSKN (332 aa). Residues threonine 84, threonine 160, aspartate 161, and lysine 237 contribute to the active site.

It belongs to the asparaginase 1 family. GatD subfamily. Heterodimer of GatD and GatE.

The catalysed reaction is L-glutamyl-tRNA(Gln) + L-glutamine + ATP + H2O = L-glutaminyl-tRNA(Gln) + L-glutamate + ADP + phosphate + H(+). Allows the formation of correctly charged Gln-tRNA(Gln) through the transamidation of misacylated Glu-tRNA(Gln) in organisms which lack glutaminyl-tRNA synthetase. The reaction takes place in the presence of glutamine and ATP through an activated gamma-phospho-Glu-tRNA(Gln). The GatDE system is specific for glutamate and does not act on aspartate. This chain is Glutamyl-tRNA(Gln) amidotransferase subunit D, found in Methanococcus maripaludis (strain C5 / ATCC BAA-1333).